The primary structure comprises 483 residues: Aspartyl/glutamyl-tRNA(Asn/Gln) amidotransferase subunit B (483 aa).

The protein belongs to the GatB/GatE family. GatB subfamily. Heterotrimer of A, B and C subunits.

The catalysed reaction is L-glutamyl-tRNA(Gln) + L-glutamine + ATP + H2O = L-glutaminyl-tRNA(Gln) + L-glutamate + ADP + phosphate + H(+). It carries out the reaction L-aspartyl-tRNA(Asn) + L-glutamine + ATP + H2O = L-asparaginyl-tRNA(Asn) + L-glutamate + ADP + phosphate + 2 H(+). Its function is as follows. Allows the formation of correctly charged Asn-tRNA(Asn) or Gln-tRNA(Gln) through the transamidation of misacylated Asp-tRNA(Asn) or Glu-tRNA(Gln) in organisms which lack either or both of asparaginyl-tRNA or glutaminyl-tRNA synthetases. The reaction takes place in the presence of glutamine and ATP through an activated phospho-Asp-tRNA(Asn) or phospho-Glu-tRNA(Gln). The protein is Aspartyl/glutamyl-tRNA(Asn/Gln) amidotransferase subunit B of Marinobacter nauticus (strain ATCC 700491 / DSM 11845 / VT8) (Marinobacter aquaeolei).